A 618-amino-acid chain; its full sequence is Structural protein ORF618 (618 aa).

Residues 570 to 598 are a coiled coil; it reads ILEAKRQIEDRAKGLSKNLDNTVTEIMNA.

It is found in the virion. The polypeptide is Structural protein ORF618 (Acidianus two-tailed virus (ATV)).